The primary structure comprises 208 residues: uncharacterized protein (208 aa).

The signal sequence occupies residues 1 to 34 (MPSHCRERLPFALHFFAVAYGASLWILGSHGLAA).

This is an uncharacterized protein from Sinorhizobium fredii (strain NBRC 101917 / NGR234).